The primary structure comprises 538 residues: RRRRSQGSEVNLTGQGQPCHSCGERCPGFLAHRWRKICQHCQCPWEEHGHTASNQDLERSLCRLVSGSQRDSLCESSSDSSVEKYAWVPSGLNPVQVHQFFKCFPEKKIPFINSPGEKYRLKQLLHQLPPHDSEARYCCSLQGEEEEELLLLFSQKRRLENLGRGCVRPVSGTMSGTVCQQCGHQISVGDVAVFASRAGLGFCWHPQCFTCAQCLELLCDLIYFYQDGKVYCGRHHAELKRPRCLACDEVIFSLECTEAEGFHWHTRHFCCFECECPLGGQRYIMKDQRPFCCSCYERLYAQYCDSCGECIGIDEGQLTYGGQHWHASESCFRCGRCGVCLLGRPFLPRHGQIYCSRSCSVLNATPESSFSPSQTDLSFQKETKDVGTSTNHELDGDSINDCTLSGSRRSLSIIDQTPISRAAPIRSLHSSLRGAPKEFSRECPNRRSLPDLNSHTRTPTRVTFQLPLSSEVKESVSLSHPSFTSSSSSDEEEGYFLGEPIPLPPFLRPPGYSAPPTHAPTSTTKKKKKKKDKSCLLS.

Residues 66–175 (SGSQRDSLCE…CVRPVSGTMS (110 aa)) form the PET domain. LIM zinc-binding domains follow at residues 177–241 (TVCQ…ELKR), 242–302 (PRCL…LYAQ), and 305–366 (DSCG…NATP). Over residues 369 to 378 (SFSPSQTDLS) the composition is skewed to polar residues. 3 disordered regions span residues 369 to 398 (SFSP…DGDS), 433 to 463 (RGAP…TRVT), and 475 to 538 (SVSL…CLLS). Residues 435–449 (APKEFSRECPNRRSL) are compositionally biased toward basic and acidic residues. The span at 451 to 463 (DLNSHTRTPTRVT) shows a compositional bias: polar residues. Low complexity-rich tracts occupy residues 475–488 (SVSL…SSSS) and 514–523 (APPTHAPTST).

Belongs to the prickle / espinas / testin family. Interacts with vangl2 via its C-terminus. The vangl2-dependent membrane recruitment of prickle3 is a prerequisite for its polarization. Interacts with wtip. Wtip is involved in the recruitment of prickle3 to the basal body. As to expression, predominantly expressed in the epidermal ectoderm.

Its subcellular location is the cytoplasm. The protein localises to the cell membrane. It localises to the mitochondrion. Functionally, involved in the planar cell polarity (PCP) pathway that is essential for the polarization of epithelial cells during morphogenetic processes, including gastrulation and neurulation. PCP is maintained by two molecular modules, the global and the core modules. Proteins of the core module include the proteins Frizzled (Fz), Disheveled (Dsh), Van Gogh (Vang), Prickle (Pk), Flamingo (Fmi, Celsr) and Diego (Dgo). The core module proteins develop subcellular asymmetry, accumulating in two groups on opposite sides of epithelial cells. Distinct proximal (Vang, Pk and Fmi) and distal (Fz, Dsh, Dgo and Fmi) complexes segregate to opposite sides of the cell, where they interact with the opposite complex in the neighboring cell at or near the adherents junctions. Directional information to orient polarization with respect to the tissue axes is provided by the global module which involves Wnt proteins. Involved in the organization of the basal body. Involved in cilia growth and positioning. Required for proper assembly, stability, and function of mitochondrial membrane ATP synthase (mitochondrial complex V). The protein is Prickle planar cell polarity protein 3-A (prickle3-a) of Xenopus laevis (African clawed frog).